Here is a 122-residue protein sequence, read N- to C-terminus: Large ribosomal subunit protein uL18 (122 aa).

Positions 1-21 (MSKLSRKQQTQKRHRRLRRHL) are enriched in basic residues. The disordered stretch occupies residues 1-26 (MSKLSRKQQTQKRHRRLRRHLTGTSD).

It belongs to the universal ribosomal protein uL18 family. In terms of assembly, part of the 50S ribosomal subunit; part of the 5S rRNA/L5/L18/L25 subcomplex. Contacts the 5S and 23S rRNAs.

Its function is as follows. This is one of the proteins that bind and probably mediate the attachment of the 5S RNA into the large ribosomal subunit, where it forms part of the central protuberance. The sequence is that of Large ribosomal subunit protein uL18 from Parasynechococcus marenigrum (strain WH8102).